The chain runs to 255 residues: Myogenic factor 5 (255 aa).

The bHLH domain maps to 83 to 134; the sequence is DRRKAATMRERRRLKKVNQAFETLKRCTTTNPNQRLPKVEILRNAIQYIESL. A compositionally biased stretch (low complexity) spans 221 to 242; that stretch reads SLPIPDSITPSPTSSTDSLPRS. Positions 221–246 are disordered; sequence SLPIPDSITPSPTSSTDSLPRSPDAH.

In terms of assembly, efficient DNA binding requires dimerization with another bHLH protein.

The protein localises to the nucleus. Its function is as follows. Acts as a transcriptional activator that promotes transcription of muscle-specific target genes and plays a role in muscle differentiation. Induces fibroblasts to differentiate into myoblasts. Probable sequence specific DNA-binding protein. This is Myogenic factor 5 (myf5) from Xenopus laevis (African clawed frog).